A 298-amino-acid polypeptide reads, in one-letter code: MSTATGGLLLVHAHPDDETITTGGTIARYRARGVPVTVVTCTLGEEGEVIGEQWAQLAADRADQLGGYRILELTRALDALDAGPPRFLGGAGRWRDSGMAGTPSAEHPRAFVNSGPEAVEALVEVLLDLRPRVVVGYDPNGGYGHPDHIRAHRVTTEAVRAAAERGWDVPKFYWTVTDADMLRLHTEALARRTAAGLPGALPRGWRLPAADELACVASDTVTTTVDVAEVLAAKRAALRAHATQITVAPSGREFALSNNIAQPVLPEEHYVLVRGRRGPAGPDGREHDLFAGLDGPAT.

Residues histidine 14, aspartate 17, and histidine 148 each coordinate Zn(2+). The segment at 277–298 is disordered; it reads RGPAGPDGREHDLFAGLDGPAT.

It belongs to the MshB deacetylase family. The cofactor is Zn(2+).

The enzyme catalyses 1D-myo-inositol 2-acetamido-2-deoxy-alpha-D-glucopyranoside + H2O = 1D-myo-inositol 2-amino-2-deoxy-alpha-D-glucopyranoside + acetate. Its function is as follows. Catalyzes the deacetylation of 1D-myo-inositol 2-acetamido-2-deoxy-alpha-D-glucopyranoside (GlcNAc-Ins) in the mycothiol biosynthesis pathway. The protein is 1D-myo-inositol 2-acetamido-2-deoxy-alpha-D-glucopyranoside deacetylase of Nocardia farcinica (strain IFM 10152).